The primary structure comprises 68 residues: Small ribosomal subunit protein bS21 (68 aa).

The segment at Pro-39–Glu-68 is disordered. The segment covering Arg-54–Glu-68 has biased composition (basic residues).

The protein belongs to the bacterial ribosomal protein bS21 family.

The chain is Small ribosomal subunit protein bS21 from Orientia tsutsugamushi (strain Boryong) (Rickettsia tsutsugamushi).